Consider the following 86-residue polypeptide: Ferredoxin YfhL (86 aa).

2 4Fe-4S ferredoxin-type domains span residues 1–29 and 31–65; these read MALLITKKCINCDMCEPECPNEAISMGDH and YEINSDKCTECVGHYETPTCQKVCPIPNTIVKDPA. 8 residues coordinate [4Fe-4S] cluster: cysteine 9, cysteine 12, cysteine 15, cysteine 19, cysteine 38, cysteine 41, cysteine 50, and cysteine 54.

[4Fe-4S] cluster serves as cofactor.

In terms of biological role, ferredoxins are iron-sulfur proteins that transfer electrons in a wide variety of metabolic reactions. In Escherichia coli (strain K12), this protein is Ferredoxin YfhL (yfhL).